The primary structure comprises 99 residues: NADH-quinone oxidoreductase subunit K (99 aa).

3 helical membrane-spanning segments follow: residues 3–23 (PDNY…GVLL), 28–48 (IVMF…FVTF), and 59–79 (VVAF…LAII).

This sequence belongs to the complex I subunit 4L family. In terms of assembly, NDH-1 is composed of 14 different subunits. Subunits NuoA, H, J, K, L, M, N constitute the membrane sector of the complex.

Its subcellular location is the cell membrane. The catalysed reaction is a quinone + NADH + 5 H(+)(in) = a quinol + NAD(+) + 4 H(+)(out). NDH-1 shuttles electrons from NADH, via FMN and iron-sulfur (Fe-S) centers, to quinones in the respiratory chain. The immediate electron acceptor for the enzyme in this species is believed to be a menaquinone. Couples the redox reaction to proton translocation (for every two electrons transferred, four hydrogen ions are translocated across the cytoplasmic membrane), and thus conserves the redox energy in a proton gradient. The polypeptide is NADH-quinone oxidoreductase subunit K (Mycolicibacterium gilvum (strain PYR-GCK) (Mycobacterium gilvum (strain PYR-GCK))).